The following is a 359-amino-acid chain: Protein Wnt-2 (359 aa).

Positions 1-25 (MNAPLAGIWPWLPLLWAWLVPEVSS) are cleaved as a signal peptide. Intrachain disulfides connect cysteine 75-cysteine 86, cysteine 126-cysteine 134, cysteine 136-cysteine 156, cysteine 205-cysteine 219, cysteine 207-cysteine 214, cysteine 277-cysteine 308, cysteine 293-cysteine 303, cysteine 307-cysteine 347, cysteine 323-cysteine 338, cysteine 325-cysteine 335, and cysteine 330-cysteine 331. Serine 211 carries O-palmitoleoyl serine; by PORCN lipidation. N-linked (GlcNAc...) asparagine glycosylation occurs at asparagine 294.

This sequence belongs to the Wnt family. In terms of processing, palmitoleoylation is required for efficient binding to frizzled receptors. Depalmitoleoylation leads to Wnt signaling pathway inhibition.

The protein resides in the secreted. The protein localises to the extracellular space. It is found in the extracellular matrix. Its function is as follows. Ligand for members of the frizzled family of seven transmembrane receptors. Probable developmental protein. May be a signaling molecule which affects the development of discrete regions of tissues. Is likely to signal over only few cell diameters. In Echinops telfairi (Lesser hedgehog tenrec), this protein is Protein Wnt-2 (WNT2).